Reading from the N-terminus, the 159-residue chain is Succinate dehydrogenase [ubiquinone] cytochrome b small subunit, mitochondrial (159 aa).

The N-terminal 56 residues, 1–56 (MAVLWRLSAVCGALGGRALLLRTPVVRPAHISAFLQDRPIPEWCGVQHIHLSPSHH), are a transit peptide targeting the mitochondrion. Residues 57–63 (SGSKAAS) are Mitochondrial matrix-facing. A helical transmembrane segment spans residues 64-85 (LHWTSERVVSVLLLGLLPAAYL). At 86-90 (NPCSA) the chain is on the mitochondrial intermembrane side. The helical transmembrane segment at 91–111 (MDYSLAAALTLHGHWGLGQVV) threads the bilayer. Histidine 102 is a heme b binding site. Residues 112 to 122 (TDYVHGDALQK) lie on the Mitochondrial matrix side of the membrane. Position 114 (tyrosine 114) interacts with a ubiquinone. The helical transmembrane segment at 123–144 (AAKAGLLALSALTFAGLCYFNY) threads the bilayer. Residues 145–159 (HDVGICKAVAMLWKL) are Mitochondrial intermembrane-facing.

The protein belongs to the CybS family. In terms of assembly, component of complex II composed of four subunits: the flavoprotein (FP) SDHA, iron-sulfur protein (IP) SDHB, and a cytochrome b560 composed of SDHC and SDHD.

Its subcellular location is the mitochondrion inner membrane. It functions in the pathway carbohydrate metabolism; tricarboxylic acid cycle. Functionally, membrane-anchoring subunit of succinate dehydrogenase (SDH) that is involved in complex II of the mitochondrial electron transport chain and is responsible for transferring electrons from succinate to ubiquinone (coenzyme Q). SDH also oxidizes malate to the non-canonical enol form of oxaloacetate, enol-oxaloacetate. Enol-oxaloacetate, which is a potent inhibitor of the succinate dehydrogenase activity, is further isomerized into keto-oxaloacetate. The protein is Succinate dehydrogenase [ubiquinone] cytochrome b small subunit, mitochondrial (SDHD) of Homo sapiens (Human).